The following is a 171-amino-acid chain: Crossover junction endodeoxyribonuclease RuvC (171 aa).

Active-site residues include D7, E66, and D138. Positions 7, 66, and 138 each coordinate Mg(2+).

This sequence belongs to the RuvC family. In terms of assembly, homodimer which binds Holliday junction (HJ) DNA. The HJ becomes 2-fold symmetrical on binding to RuvC with unstacked arms; it has a different conformation from HJ DNA in complex with RuvA. In the full resolvosome a probable DNA-RuvA(4)-RuvB(12)-RuvC(2) complex forms which resolves the HJ. The cofactor is Mg(2+).

It localises to the cytoplasm. It catalyses the reaction Endonucleolytic cleavage at a junction such as a reciprocal single-stranded crossover between two homologous DNA duplexes (Holliday junction).. Its function is as follows. The RuvA-RuvB-RuvC complex processes Holliday junction (HJ) DNA during genetic recombination and DNA repair. Endonuclease that resolves HJ intermediates. Cleaves cruciform DNA by making single-stranded nicks across the HJ at symmetrical positions within the homologous arms, yielding a 5'-phosphate and a 3'-hydroxyl group; requires a central core of homology in the junction. The consensus cleavage sequence is 5'-(A/T)TT(C/G)-3'. Cleavage occurs on the 3'-side of the TT dinucleotide at the point of strand exchange. HJ branch migration catalyzed by RuvA-RuvB allows RuvC to scan DNA until it finds its consensus sequence, where it cleaves and resolves the cruciform DNA. The sequence is that of Crossover junction endodeoxyribonuclease RuvC from Francisella tularensis subsp. mediasiatica (strain FSC147).